Consider the following 550-residue polypeptide: Mitochondrial distribution and morphology protein 12 (550 aa).

In terms of domain architecture, SMP-LTD spans 1 to 550 (MSIDLNWETV…VYPSYWTFLV (550 aa)). Disordered stretches follow at residues 76-97 (SDLA…DRRR), 196-386 (GHGH…KLRE), and 466-489 (ENEV…GGNG). The span at 83 to 92 (GSEEDEEEIA) shows a compositional bias: acidic residues. Residues 270 to 286 (PPFPPSSTGGPSPPPGL) are compositionally biased toward pro residues. A compositionally biased stretch (basic residues) spans 288-305 (KPHHPHHPHHHHAHHAHP). Basic and acidic residues predominate over residues 327 to 344 (PTRDKTTPSHHPDPEDVH). Residues 346-355 (PNTTTTNKQR) are compositionally biased toward polar residues. Positions 356 to 371 (STSPATSSPLATSAQE) are enriched in low complexity.

Belongs to the MDM12 family. In terms of assembly, component of the ER-mitochondria encounter structure (ERMES) or MDM complex, composed of MMM1, MDM10, MDM12 and MDM34. An MMM1 homodimer associates with one molecule of MDM12 on each side in a pairwise head-to-tail manner, and the SMP-LTD domains of MMM1 and MDM12 generate a continuous hydrophobic tunnel for phospholipid trafficking.

Its subcellular location is the mitochondrion outer membrane. The protein resides in the endoplasmic reticulum membrane. In terms of biological role, component of the ERMES/MDM complex, which serves as a molecular tether to connect the endoplasmic reticulum (ER) and mitochondria. Components of this complex are involved in the control of mitochondrial shape and protein biogenesis, and function in nonvesicular lipid trafficking between the ER and mitochondria. MDM12 is required for the interaction of the ER-resident membrane protein MMM1 and the outer mitochondrial membrane-resident beta-barrel protein MDM10. The MDM12-MMM1 subcomplex functions in the major beta-barrel assembly pathway that is responsible for biogenesis of all mitochondrial outer membrane beta-barrel proteins, and acts in a late step after the SAM complex. The MDM10-MDM12-MMM1 subcomplex further acts in the TOM40-specific pathway after the action of the MDM12-MMM1 complex. Essential for establishing and maintaining the structure of mitochondria and maintenance of mtDNA nucleoids. This Podospora anserina (strain S / ATCC MYA-4624 / DSM 980 / FGSC 10383) (Pleurage anserina) protein is Mitochondrial distribution and morphology protein 12.